A 459-amino-acid polypeptide reads, in one-letter code: Probable rhamnogalacturonase C (459 aa).

The first 18 residues, 1-18 (MRASILPLTLFLATLAGA), serve as a signal peptide directing secretion. 5 N-linked (GlcNAc...) asparagine glycosylation sites follow: asparagine 36, asparagine 64, asparagine 77, asparagine 140, and asparagine 155. Cysteine 39 and cysteine 65 are disulfide-bonded. Catalysis depends on aspartate 216, which acts as the Proton donor. A disulfide bond links cysteine 218 and cysteine 235. Residues asparagine 236 and asparagine 251 are each glycosylated (N-linked (GlcNAc...) asparagine). The active site involves histidine 290. A glycan (N-linked (GlcNAc...) asparagine) is linked at asparagine 315. Cysteine 337 and cysteine 343 form a disulfide bridge. A glycan (N-linked (GlcNAc...) asparagine) is linked at asparagine 356. Cysteine 365 and cysteine 374 are oxidised to a cystine.

The protein belongs to the glycosyl hydrolase 28 family.

Its subcellular location is the secreted. Pectinolytic enzymes consist of four classes of enzymes: pectine lyase, polygalacturonase, pectin methylesterase and rhamnogalacturonase. Hydrolyzes alpha-D-galacturonopyranosyl-(1,2)-alpha-L-rhamnopyranosyl linkages in the backbone of the hairy regions of pectins. The polypeptide is Probable rhamnogalacturonase C (rhgC) (Aspergillus niger (strain ATCC MYA-4892 / CBS 513.88 / FGSC A1513)).